The sequence spans 291 residues: 4-hydroxy-tetrahydrodipicolinate synthase (291 aa).

Position 42 (T42) interacts with pyruvate. Residue Y129 is the Proton donor/acceptor of the active site. The active-site Schiff-base intermediate with substrate is the K157. I198 provides a ligand contact to pyruvate.

This sequence belongs to the DapA family. In terms of assembly, homotetramer; dimer of dimers.

The protein resides in the cytoplasm. It carries out the reaction L-aspartate 4-semialdehyde + pyruvate = (2S,4S)-4-hydroxy-2,3,4,5-tetrahydrodipicolinate + H2O + H(+). The protein operates within amino-acid biosynthesis; L-lysine biosynthesis via DAP pathway; (S)-tetrahydrodipicolinate from L-aspartate: step 3/4. Functionally, catalyzes the condensation of (S)-aspartate-beta-semialdehyde [(S)-ASA] and pyruvate to 4-hydroxy-tetrahydrodipicolinate (HTPA). In Chlamydia pneumoniae (Chlamydophila pneumoniae), this protein is 4-hydroxy-tetrahydrodipicolinate synthase.